The chain runs to 141 residues: VLSPADKSNVKAAWGKVGGHAGDYGAEALERMFLSFPTTKTYFPHFDLSHGSAQVKGHGKKVADALTNAVALVDDMPNALSALSDLHAHKLRVDPVNFKLLSHCLLVTLAAHHPADFTPAVHASLDKFLASVSTVLTSKYR.

One can recognise a Globin domain in the interval 1–141; that stretch reads VLSPADKSNV…VSTVLTSKYR (141 aa). The residue at position 3 (Ser-3) is a Phosphoserine. Lys-7 and Lys-11 each carry N6-succinyllysine. Residue Lys-16 is modified to N6-acetyllysine; alternate. The residue at position 16 (Lys-16) is an N6-succinyllysine; alternate. At Tyr-24 the chain carries Phosphotyrosine. At Ser-35 the chain carries Phosphoserine. N6-succinyllysine is present on Lys-40. Position 49 is a phosphoserine (Ser-49). O2 is bound at residue His-58. His-87 contacts heme b. Ser-102 is modified (phosphoserine). Thr-108 is subject to Phosphothreonine. Phosphoserine occurs at positions 124 and 131. Phosphothreonine occurs at positions 134 and 137. Position 138 is a phosphoserine (Ser-138).

Belongs to the globin family. In terms of assembly, heterotetramer of two alpha chains and two beta chains. Red blood cells.

In terms of biological role, involved in oxygen transport from the lung to the various peripheral tissues. Hemopressin acts as an antagonist peptide of the cannabinoid receptor CNR1. Hemopressin-binding efficiently blocks cannabinoid receptor CNR1 and subsequent signaling. This Saguinus mystax (Moustached tamarin) protein is Hemoglobin subunit alpha (HBA).